The primary structure comprises 172 residues: Crossover junction endodeoxyribonuclease RuvC (172 aa).

Catalysis depends on residues D8, E67, and D139. Mg(2+)-binding residues include D8, E67, and D139.

Belongs to the RuvC family. In terms of assembly, homodimer which binds Holliday junction (HJ) DNA. The HJ becomes 2-fold symmetrical on binding to RuvC with unstacked arms; it has a different conformation from HJ DNA in complex with RuvA. In the full resolvosome a probable DNA-RuvA(4)-RuvB(12)-RuvC(2) complex forms which resolves the HJ. The cofactor is Mg(2+).

It localises to the cytoplasm. It carries out the reaction Endonucleolytic cleavage at a junction such as a reciprocal single-stranded crossover between two homologous DNA duplexes (Holliday junction).. Its function is as follows. The RuvA-RuvB-RuvC complex processes Holliday junction (HJ) DNA during genetic recombination and DNA repair. Endonuclease that resolves HJ intermediates. Cleaves cruciform DNA by making single-stranded nicks across the HJ at symmetrical positions within the homologous arms, yielding a 5'-phosphate and a 3'-hydroxyl group; requires a central core of homology in the junction. The consensus cleavage sequence is 5'-(A/T)TT(C/G)-3'. Cleavage occurs on the 3'-side of the TT dinucleotide at the point of strand exchange. HJ branch migration catalyzed by RuvA-RuvB allows RuvC to scan DNA until it finds its consensus sequence, where it cleaves and resolves the cruciform DNA. The sequence is that of Crossover junction endodeoxyribonuclease RuvC from Hahella chejuensis (strain KCTC 2396).